Reading from the N-terminus, the 279-residue chain is MKHLKRNMALLSVAALSFILTACSTAPITSHSTGIWDGVIVYNFSRFIIYLSKLFGGNYGWGIIVFTIIIRIIILPLMIYQTRTTMKTAELQPKLKQLQQKYSSRDAESQQKLREEQQKLYAEAGVNPMAGCLPLIIQLPVMYALYAAVSRTQVLKEGTFLWLQLSDKDPYFILPILAALFTFMSTWLSMKSQPAGSQNGMTSAMTFGMPLVILITALNFPAAITLYWVVTNLFQVGQTLIIQNPFKIQKEREEKIQTEKAKRKAIEKAKRRAMKSKRK.

Residues 1 to 22 (MKHLKRNMALLSVAALSFILTA) form the signal peptide. Cysteine 23 carries N-palmitoyl cysteine lipidation. A lipid anchor (S-diacylglycerol cysteine) is attached at cysteine 23. 5 helical membrane-spanning segments follow: residues 35–55 (IWDG…SKLF), 59–79 (YGWG…PLMI), 129–149 (MAGC…YAAV), 170–190 (PYFI…WLSM), and 210–230 (PLVI…YWVV). Residues 253-268 (EEKIQTEKAKRKAIEK) show a composition bias toward basic and acidic residues. Residues 253–279 (EEKIQTEKAKRKAIEKAKRRAMKSKRK) are disordered. The segment covering 269 to 279 (AKRRAMKSKRK) has biased composition (basic residues).

This sequence belongs to the OXA1/ALB3/YidC family. Type 2 subfamily.

Its subcellular location is the cell membrane. Functionally, required for the insertion and/or proper folding and/or complex formation of integral membrane proteins into the membrane. Involved in integration of membrane proteins that insert both dependently and independently of the Sec translocase complex, as well as at least some lipoproteins. The sequence is that of Membrane protein insertase YidC from Pediococcus pentosaceus (strain ATCC 25745 / CCUG 21536 / LMG 10740 / 183-1w).